Reading from the N-terminus, the 743-residue chain is Phosphoribosylformylglycinamidine synthase subunit PurL (743 aa).

Histidine 50 is a catalytic residue. Residues tyrosine 53 and lysine 92 each contribute to the ATP site. Glutamate 94 is a Mg(2+) binding site. Residues 95–98 (SHNH) and arginine 117 each bind substrate. Histidine 96 (proton acceptor) is an active-site residue. Position 118 (aspartate 118) interacts with Mg(2+). Substrate is bound at residue glutamine 241. Residue aspartate 269 participates in Mg(2+) binding. 313 to 315 (ESQ) serves as a coordination point for substrate. ATP contacts are provided by aspartate 494 and glycine 531. A Mg(2+)-binding site is contributed by asparagine 532. Position 534 (serine 534) interacts with substrate.

It belongs to the FGAMS family. As to quaternary structure, monomer. Part of the FGAM synthase complex composed of 1 PurL, 1 PurQ and 2 PurS subunits.

Its subcellular location is the cytoplasm. The catalysed reaction is N(2)-formyl-N(1)-(5-phospho-beta-D-ribosyl)glycinamide + L-glutamine + ATP + H2O = 2-formamido-N(1)-(5-O-phospho-beta-D-ribosyl)acetamidine + L-glutamate + ADP + phosphate + H(+). The protein operates within purine metabolism; IMP biosynthesis via de novo pathway; 5-amino-1-(5-phospho-D-ribosyl)imidazole from N(2)-formyl-N(1)-(5-phospho-D-ribosyl)glycinamide: step 1/2. Functionally, part of the phosphoribosylformylglycinamidine synthase complex involved in the purines biosynthetic pathway. Catalyzes the ATP-dependent conversion of formylglycinamide ribonucleotide (FGAR) and glutamine to yield formylglycinamidine ribonucleotide (FGAM) and glutamate. The FGAM synthase complex is composed of three subunits. PurQ produces an ammonia molecule by converting glutamine to glutamate. PurL transfers the ammonia molecule to FGAR to form FGAM in an ATP-dependent manner. PurS interacts with PurQ and PurL and is thought to assist in the transfer of the ammonia molecule from PurQ to PurL. In Rhizobium meliloti (strain 1021) (Ensifer meliloti), this protein is Phosphoribosylformylglycinamidine synthase subunit PurL.